We begin with the raw amino-acid sequence, 337 residues long: Anthranilate phosphoribosyltransferase (337 aa).

Residues glycine 82, 85-86 (GD), threonine 90, 92-95 (NIST), 110-118 (KHGNRAMSS), and threonine 122 contribute to the 5-phospho-alpha-D-ribose 1-diphosphate site. Anthranilate is bound at residue glycine 82. Residue serine 94 coordinates Mg(2+). Position 113 (asparagine 113) interacts with anthranilate. Arginine 168 is an anthranilate binding site. Residues aspartate 226 and glutamate 227 each coordinate Mg(2+).

It belongs to the anthranilate phosphoribosyltransferase family. As to quaternary structure, homodimer. Requires Mg(2+) as cofactor.

It carries out the reaction N-(5-phospho-beta-D-ribosyl)anthranilate + diphosphate = 5-phospho-alpha-D-ribose 1-diphosphate + anthranilate. The protein operates within amino-acid biosynthesis; L-tryptophan biosynthesis; L-tryptophan from chorismate: step 2/5. Functionally, catalyzes the transfer of the phosphoribosyl group of 5-phosphorylribose-1-pyrophosphate (PRPP) to anthranilate to yield N-(5'-phosphoribosyl)-anthranilate (PRA). This is Anthranilate phosphoribosyltransferase from Phenylobacterium zucineum (strain HLK1).